The chain runs to 194 residues: Fe/S biogenesis protein NfuA (194 aa).

Residues cysteine 151 and cysteine 154 each coordinate [4Fe-4S] cluster.

It belongs to the NfuA family. In terms of assembly, homodimer. [4Fe-4S] cluster is required as a cofactor.

Involved in iron-sulfur cluster biogenesis. Binds a 4Fe-4S cluster, can transfer this cluster to apoproteins, and thereby intervenes in the maturation of Fe/S proteins. Could also act as a scaffold/chaperone for damaged Fe/S proteins. This is Fe/S biogenesis protein NfuA from Pasteurella multocida (strain Pm70).